A 122-amino-acid chain; its full sequence is Small ribosomal subunit protein uS13 (122 aa).

The segment at 99-122 (RGQRTHTNARTRKGPAKAIAGKKK) is disordered.

It belongs to the universal ribosomal protein uS13 family. In terms of assembly, part of the 30S ribosomal subunit. Forms a loose heterodimer with protein S19. Forms two bridges to the 50S subunit in the 70S ribosome.

Located at the top of the head of the 30S subunit, it contacts several helices of the 16S rRNA. In the 70S ribosome it contacts the 23S rRNA (bridge B1a) and protein L5 of the 50S subunit (bridge B1b), connecting the 2 subunits; these bridges are implicated in subunit movement. Contacts the tRNAs in the A and P-sites. This Rhizobium meliloti (strain 1021) (Ensifer meliloti) protein is Small ribosomal subunit protein uS13.